We begin with the raw amino-acid sequence, 146 residues long: MGRFIFMSFGFLVVFLSLSGTAADCPSDWSSYEGHCYKPFSEPKNWADAENFCTQQHAGGHLVSFQSSEEADFVVKLAFQTFGHSIFWMGLSNVWNQCNWQWSNAAMLRYKAWAEESYCVYFKSTNNKWRSRACRMMAQFVCEFQA.

Residues 1–23 (MGRFIFMSFGFLVVFLSLSGTAA) form the signal peptide. Positions 24–146 (DCPSDWSSYE…MAQFVCEFQA (123 aa)) constitute a C-type lectin domain. Disulfide bonds link Cys25-Cys36, Cys53-Cys142, and Cys119-Cys134. Ca(2+)-binding residues include Ser64, Gln66, and Glu70. Ca(2+) is bound at residue Glu143.

Belongs to the snaclec family. Heterodimer with subunit A of IX/X-bp or IX-bp; disulfide-linked. Expressed by the venom gland.

It localises to the secreted. In terms of biological role, when linked to subunit A of IX/X-bp, anticoagulant protein which binds to the gamma-carboxyglutamic acid-domain regions of factors IX (F9) and factor X (10) in the presence of calcium with a 1 to 1 stoichiometry. Its function is as follows. When linked to subunit A of IX-bp, anticoagulant protein which binds to the gamma-carboxyglutamic acid-domain regions of factor IX (but not to factor X) in the presence of calcium with a 1 to 1 stoichiometry. The protein is Snaclec coagulation factor IX/factor X-binding protein subunit B of Protobothrops flavoviridis (Habu).